A 159-amino-acid polypeptide reads, in one-letter code: Transcription elongation factor GreA (159 aa).

Positions 5-77 (REVVLTAQGL…LETMLRKAVI (73 aa)) form a coiled coil.

It belongs to the GreA/GreB family.

Functionally, necessary for efficient RNA polymerase transcription elongation past template-encoded arresting sites. The arresting sites in DNA have the property of trapping a certain fraction of elongating RNA polymerases that pass through, resulting in locked ternary complexes. Cleavage of the nascent transcript by cleavage factors such as GreA or GreB allows the resumption of elongation from the new 3'terminus. GreA releases sequences of 2 to 3 nucleotides. This chain is Transcription elongation factor GreA, found in Alkaliphilus oremlandii (strain OhILAs) (Clostridium oremlandii (strain OhILAs)).